The chain runs to 677 residues: Fermitin family homolog 1 (677 aa).

Positions 96–653 (MLRLRLPNAK…HEYIGGYIFL (558 aa)) constitute an FERM domain. The tract at residues 157–181 (KEPVIEDILNLESSSTSSGSPVSPG) is disordered. A compositionally biased stretch (low complexity) spans 169-181 (SSSTSSGSPVSPG). Phosphoserine occurs at positions 170 and 179. Residues 377 to 473 (KLFRPKKLML…WMAACILASK (97 aa)) form the PH domain.

Belongs to the kindlin family. Interacts with the cytoplasmic domain of integrins ITGB1 and ITGB3.

The protein resides in the cytoplasm. Its subcellular location is the cytoskeleton. The protein localises to the cell junction. It localises to the focal adhesion. It is found in the cell projection. The protein resides in the ruffle membrane. In terms of biological role, involved in cell adhesion. Contributes to integrin activation. When coexpressed with talin, potentiates activation of ITGA2B. Required for normal keratinocyte proliferation. Required for normal polarization of basal keratinocytes in skin, and for normal cell shape. Required for normal adhesion of keratinocytes to fibronectin and laminin, and for normal keratinocyte migration to wound sites. This is Fermitin family homolog 1 (Fermt1) from Mus musculus (Mouse).